The chain runs to 804 residues: Enhancer of polycomb homolog 2 (804 aa).

Disordered stretches follow at residues 372–398, 484–507, 602–623, and 642–669; these read QSSDDDEFPQVPSPLSELEEENDPDGS, GFSSSSHVAQPPSSPSRTNASDRH, QQSQQSLQQSHPKAQGSAKSDC, and NSPTPGRSEVNKDQNAGHSNLNGVVQPS. Over residues 602–611 the composition is skewed to low complexity; it reads QQSQQSLQQS. Polar residues predominate over residues 654 to 669; that stretch reads DQNAGHSNLNGVVQPS.

Belongs to the enhancer of polycomb family.

The protein localises to the nucleus. May play a role in transcription or DNA repair. The sequence is that of Enhancer of polycomb homolog 2 (epc2) from Xenopus tropicalis (Western clawed frog).